The chain runs to 173 residues: NADH-ubiquinone oxidoreductase chain 6 (173 aa).

5 consecutive transmembrane segments (helical) span residues 1–21 (MTYLVSLLLMALIVGLIAVAS), 24–44 (APYFAALGLVVAAGVGCGVLV), 53–73 (LVLFLIYLGGMLVVFAYSAAL), 86–106 (SVVGYVMIYLLGVGLMVGVFW), and 139–159 (YGGGMLVICAWVLLLTLFVVL).

It belongs to the complex I subunit 6 family.

The protein resides in the mitochondrion membrane. It catalyses the reaction a ubiquinone + NADH + 5 H(+)(in) = a ubiquinol + NAD(+) + 4 H(+)(out). Core subunit of the mitochondrial membrane respiratory chain NADH dehydrogenase (Complex I) that is believed to belong to the minimal assembly required for catalysis. Complex I functions in the transfer of electrons from NADH to the respiratory chain. The immediate electron acceptor for the enzyme is believed to be ubiquinone. The protein is NADH-ubiquinone oxidoreductase chain 6 (MT-ND6) of Formosania lacustris (Oriental stream loach).